Here is a 339-residue protein sequence, read N- to C-terminus: Methylthioribose-1-phosphate isomerase (339 aa).

Substrate contacts are provided by residues 52-54, R89, and Q188; that span reads RGA. The active-site Proton donor is D229. Substrate is bound at residue 239 to 240; it reads NK.

This sequence belongs to the eIF-2B alpha/beta/delta subunits family. MtnA subfamily.

The catalysed reaction is 5-(methylsulfanyl)-alpha-D-ribose 1-phosphate = 5-(methylsulfanyl)-D-ribulose 1-phosphate. It participates in amino-acid biosynthesis; L-methionine biosynthesis via salvage pathway; L-methionine from S-methyl-5-thio-alpha-D-ribose 1-phosphate: step 1/6. In terms of biological role, catalyzes the interconversion of methylthioribose-1-phosphate (MTR-1-P) into methylthioribulose-1-phosphate (MTRu-1-P). This chain is Methylthioribose-1-phosphate isomerase, found in Anaeromyxobacter dehalogenans (strain 2CP-C).